A 23-amino-acid chain; its full sequence is Basic phospholipase A2 homolog Vur-S49 analog (23 aa).

Positions 1-23 (SVLEIGLMLQEETEKNPKTSYSI) are disordered.

In terms of processing, contains 7 disulfide bonds. In terms of tissue distribution, expressed by the venom gland.

The protein localises to the secreted. The chain is Basic phospholipase A2 homolog Vur-S49 analog from Vipera renardi (Steppe viper).